We begin with the raw amino-acid sequence, 460 residues long: Exodeoxyribonuclease 7 large subunit (460 aa).

Belongs to the XseA family. As to quaternary structure, heterooligomer composed of large and small subunits.

The protein resides in the cytoplasm. The enzyme catalyses Exonucleolytic cleavage in either 5'- to 3'- or 3'- to 5'-direction to yield nucleoside 5'-phosphates.. Bidirectionally degrades single-stranded DNA into large acid-insoluble oligonucleotides, which are then degraded further into small acid-soluble oligonucleotides. This is Exodeoxyribonuclease 7 large subunit from Edwardsiella ictaluri (strain 93-146).